An 89-amino-acid chain; its full sequence is ICNGQWTSVGSAGLYYTIKADSMCVDIHYTDGFIQPSCQGLQVIGPCNRYQNGPRDFVACQTSGGSGHPICIQSTNGNIELCANCYCPQ.

Glutamine amide is present on Gln-89.

Homodimer. Contains disulfide bonds which may also be involved in dimerization.

Its function is as follows. Blocks calcium currents via interaction with a yet unknown target protein. Has no effect on L-type, T-type, N-type or P/Q-type voltage-gated calcium channels (VGCC). Has no effect on voltage-gated potassium or chloride channels. Blocks non-L-type VGCC calcium currents in mouse duodenal myocytes (IC(50)=0.2 uM). Blocks calcium influx induced by hypoxia/reoxygenation in rat hepatocytes. The protein is Mapacalcine of Pione vastifica (Boring sponge).